The sequence spans 232 residues: N-(5'-phosphoribosyl)anthranilate isomerase (232 aa).

This sequence belongs to the TrpF family.

It catalyses the reaction N-(5-phospho-beta-D-ribosyl)anthranilate = 1-(2-carboxyphenylamino)-1-deoxy-D-ribulose 5-phosphate. The protein operates within amino-acid biosynthesis; L-tryptophan biosynthesis; L-tryptophan from chorismate: step 3/5. The protein is N-(5'-phosphoribosyl)anthranilate isomerase (TRP1) of Wickerhamomyces anomalus (Yeast).